Reading from the N-terminus, the 211-residue chain is Pyridoxine/pyridoxamine 5'-phosphate oxidase (211 aa).

Substrate-binding positions include 7–10 and K65; that span reads RTDY. FMN is bound by residues 60–65, 75–76, R81, and K82; these read RIVLIK and FT. The substrate site is built by Y122, R126, and S130. FMN is bound by residues 139 to 140 and W183; that span reads QS. Substrate is bound at residue 189–191; it reads RLH. R193 contacts FMN.

Belongs to the pyridoxamine 5'-phosphate oxidase family. In terms of assembly, homodimer. The cofactor is FMN.

The catalysed reaction is pyridoxamine 5'-phosphate + O2 + H2O = pyridoxal 5'-phosphate + H2O2 + NH4(+). The enzyme catalyses pyridoxine 5'-phosphate + O2 = pyridoxal 5'-phosphate + H2O2. It participates in cofactor metabolism; pyridoxal 5'-phosphate salvage; pyridoxal 5'-phosphate from pyridoxamine 5'-phosphate: step 1/1. It functions in the pathway cofactor metabolism; pyridoxal 5'-phosphate salvage; pyridoxal 5'-phosphate from pyridoxine 5'-phosphate: step 1/1. Functionally, catalyzes the oxidation of either pyridoxine 5'-phosphate (PNP) or pyridoxamine 5'-phosphate (PMP) into pyridoxal 5'-phosphate (PLP). The chain is Pyridoxine/pyridoxamine 5'-phosphate oxidase from Herminiimonas arsenicoxydans.